Consider the following 431-residue polypeptide: Alpha-gurjunene synthase (431 aa).

Residues Asp-126 and Asp-130 each contribute to the Mg(2+) site. A (2E,6E)-farnesyl diphosphate-binding site is contributed by Arg-267. Asn-321 and Ser-325 together coordinate Mg(2+). Lys-328 serves as a coordination point for (2E,6E)-farnesyl diphosphate. Glu-329 is a binding site for Mg(2+). Arg-412–Tyr-413 is a (2E,6E)-farnesyl diphosphate binding site.

It belongs to the terpene synthase family. The cofactor is Mg(2+).

It carries out the reaction (2E,6E)-farnesyl diphosphate = (-)-alpha-gurjunene + diphosphate. The catalysed reaction is (2E,6E)-farnesyl diphosphate + H2O = 5-hydroxy-alpha-gurjunene + diphosphate. It participates in secondary metabolite biosynthesis; terpenoid biosynthesis. Catalyzes the conversion of (2E,6E)-farnesyl diphosphate (FPP) into the sesquiterpene alcohols (-)-alpha-gurjunene and 5-hydroxy-alpha-gurjunene. Other unidentified sesquiterpene alcohols found to be catalyzed by MTPSL4 may arise from carbocation reaction intermediates along the catalytic cascade to gurjunene being quenched by a water molecule, yielding formation of the alcohols. This chain is Alpha-gurjunene synthase, found in Marchantia polymorpha (Common liverwort).